A 272-amino-acid chain; its full sequence is PHD finger protein ALFIN-LIKE 6 (272 aa).

The span at 1–23 (MEGGGGGGGGGGGGGGGGGGGGA) shows a compositional bias: gly residues. 2 disordered regions span residues 1–24 (MEGGGGGGGGGGGGGGGGGGGGAP) and 162–218 (QAKE…DNTL). Positions 168–182 (PNSSSKSNKPSSKVQ) are enriched in low complexity. A compositionally biased stretch (basic and acidic residues) spans 183–200 (SKAESRSKSKLSAPKDEE). Over residues 201-214 (GSGDDEGEEEEDDH) the composition is skewed to acidic residues. The segment at 216–268 (NTLCGTCGTNDGKDEFWICCDNCEKWYHGKCVKITPARAEHIKQYKCPDCTNK) adopts a PHD-type zinc-finger fold.

It belongs to the Alfin family.

The protein localises to the nucleus. In terms of biological role, histone-binding component that specifically recognizes H3 tails trimethylated on 'Lys-4' (H3K4me3), which mark transcription start sites of virtually all active genes. This is PHD finger protein ALFIN-LIKE 6 from Oryza sativa subsp. indica (Rice).